The following is a 452-amino-acid chain: Phosphoglucosamine mutase (452 aa).

The active-site Phosphoserine intermediate is the Ser103. Mg(2+) contacts are provided by Ser103, Asp243, Asp245, and Asp247. Ser103 carries the post-translational modification Phosphoserine.

Belongs to the phosphohexose mutase family. It depends on Mg(2+) as a cofactor. Post-translationally, activated by phosphorylation.

The enzyme catalyses alpha-D-glucosamine 1-phosphate = D-glucosamine 6-phosphate. In terms of biological role, catalyzes the conversion of glucosamine-6-phosphate to glucosamine-1-phosphate. The chain is Phosphoglucosamine mutase from Lactobacillus acidophilus (strain ATCC 700396 / NCK56 / N2 / NCFM).